The sequence spans 326 residues: tRNA-modifying protein YgfZ (326 aa).

Folate contacts are provided by Trp-27 and Trp-189.

It belongs to the tRNA-modifying YgfZ family.

It localises to the cytoplasm. Its function is as follows. Folate-binding protein involved in regulating the level of ATP-DnaA and in the modification of some tRNAs. It is probably a key factor in regulatory networks that act via tRNA modification, such as initiation of chromosomal replication. This Salmonella schwarzengrund (strain CVM19633) protein is tRNA-modifying protein YgfZ.